Consider the following 125-residue polypeptide: Histone H2A (125 aa).

Residues 1-18 (MSGRGKGGKVKGKSKTRS) are compositionally biased toward basic residues. The tract at residues 1 to 23 (MSGRGKGGKVKGKSKTRSSRAGL) is disordered. Ser2 bears the N-acetylserine mark. Residue Gln104 is modified to N5-methylglutamine.

Belongs to the histone H2A family. In terms of assembly, the nucleosome is a histone octamer containing two molecules each of H2A, H2B, H3 and H4 assembled in one H3-H4 heterotetramer and two H2A-H2B heterodimers. The octamer wraps approximately 147 bp of DNA.

The protein resides in the nucleus. It is found in the chromosome. Functionally, core component of nucleosome. Nucleosomes wrap and compact DNA into chromatin, limiting DNA accessibility to the cellular machineries which require DNA as a template. Histones thereby play a central role in transcription regulation, DNA repair, DNA replication and chromosomal stability. DNA accessibility is regulated via a complex set of post-translational modifications of histones, also called histone code, and nucleosome remodeling. The chain is Histone H2A from Sepia officinalis (Common cuttlefish).